The chain runs to 1058 residues: Carbamoyl phosphate synthase large chain (1058 aa).

The carboxyphosphate synthetic domain stretch occupies residues 1 to 401 (MPKRKDIQKI…SLLKACRSLE (401 aa)). Residues Arg-129, Arg-169, Gly-175, Gly-176, Arg-208, Ile-210, Glu-215, Gly-241, Ile-242, His-243, Gln-284, and Glu-298 each contribute to the ATP site. Positions 133–327 (KQLMQELDQP…IAKLAAKIAV (195 aa)) constitute an ATP-grasp 1 domain. 3 residues coordinate Mg(2+): Gln-284, Glu-298, and Asn-300. Mn(2+) contacts are provided by Gln-284, Glu-298, and Asn-300. The tract at residues 402-546 (IGVCHNEMTS…YSTYELENES (145 aa)) is oligomerization domain. Positions 547 to 929 (VQSNKESILV…ALYKAFEANN (383 aa)) are carbamoyl phosphate synthetic domain. The ATP-grasp 2 domain occupies 671–861 (EKALKELGIP…MAQIATKLIL (191 aa)). ATP-binding residues include Arg-707, Ser-746, Ile-748, Glu-752, Gly-777, Val-778, His-779, Ser-780, Gln-820, and Glu-832. 3 residues coordinate Mg(2+): Gln-820, Glu-832, and Asn-834. Mn(2+)-binding residues include Gln-820, Glu-832, and Asn-834. Positions 930–1058 (SHLSEFGQIV…ESRCFNIEAI (129 aa)) constitute an MGS-like domain. Residues 930 to 1058 (SHLSEFGQIV…ESRCFNIEAI (129 aa)) form an allosteric domain region.

The protein belongs to the CarB family. In terms of assembly, composed of two chains; the small (or glutamine) chain promotes the hydrolysis of glutamine to ammonia, which is used by the large (or ammonia) chain to synthesize carbamoyl phosphate. Tetramer of heterodimers (alpha,beta)4. Mg(2+) serves as cofactor. Requires Mn(2+) as cofactor.

It catalyses the reaction hydrogencarbonate + L-glutamine + 2 ATP + H2O = carbamoyl phosphate + L-glutamate + 2 ADP + phosphate + 2 H(+). The enzyme catalyses hydrogencarbonate + NH4(+) + 2 ATP = carbamoyl phosphate + 2 ADP + phosphate + 2 H(+). It functions in the pathway amino-acid biosynthesis; L-arginine biosynthesis; carbamoyl phosphate from bicarbonate: step 1/1. It participates in pyrimidine metabolism; UMP biosynthesis via de novo pathway; (S)-dihydroorotate from bicarbonate: step 1/3. Large subunit of the glutamine-dependent carbamoyl phosphate synthetase (CPSase). CPSase catalyzes the formation of carbamoyl phosphate from the ammonia moiety of glutamine, carbonate, and phosphate donated by ATP, constituting the first step of 2 biosynthetic pathways, one leading to arginine and/or urea and the other to pyrimidine nucleotides. The large subunit (synthetase) binds the substrates ammonia (free or transferred from glutamine from the small subunit), hydrogencarbonate and ATP and carries out an ATP-coupled ligase reaction, activating hydrogencarbonate by forming carboxy phosphate which reacts with ammonia to form carbamoyl phosphate. The protein is Carbamoyl phosphate synthase large chain of Streptococcus pyogenes serotype M3 (strain SSI-1).